Reading from the N-terminus, the 163-residue chain is Ribonuclease P protein subunit p25-like protein (163 aa).

Disordered stretches follow at residues 1 to 24 and 126 to 163; these read MEQY…LPPD and LDPS…DTRS. Positions 153 to 163 are enriched in basic residues; it reads RPRRRARDTRS.

This sequence belongs to the histone-like Alba family.

It is found in the nucleus. Its function is as follows. May be a component of ribonuclease P or MRP. The sequence is that of Ribonuclease P protein subunit p25-like protein (Rpp25l) from Mus musculus (Mouse).